The chain runs to 177 residues: ATP-dependent protease subunit HslV (177 aa).

The active site involves T2. Residues G157, C160, and T163 each contribute to the Na(+) site.

Belongs to the peptidase T1B family. HslV subfamily. In terms of assembly, a double ring-shaped homohexamer of HslV is capped on each side by a ring-shaped HslU homohexamer. The assembly of the HslU/HslV complex is dependent on binding of ATP.

The protein resides in the cytoplasm. It catalyses the reaction ATP-dependent cleavage of peptide bonds with broad specificity.. Allosterically activated by HslU binding. Its function is as follows. Protease subunit of a proteasome-like degradation complex believed to be a general protein degrading machinery. The chain is ATP-dependent protease subunit HslV from Aeromonas hydrophila subsp. hydrophila (strain ATCC 7966 / DSM 30187 / BCRC 13018 / CCUG 14551 / JCM 1027 / KCTC 2358 / NCIMB 9240 / NCTC 8049).